A 398-amino-acid polypeptide reads, in one-letter code: Phosphoglycerate kinase (398 aa).

Residues 24–26, R39, 62–65, R121, and R154 each bind substrate; these read DFN and HFGR. Residues K205, G296, E327, and 354 to 357 each bind ATP; that span reads GGDS.

The protein belongs to the phosphoglycerate kinase family. As to quaternary structure, monomer.

It is found in the cytoplasm. It carries out the reaction (2R)-3-phosphoglycerate + ATP = (2R)-3-phospho-glyceroyl phosphate + ADP. It functions in the pathway carbohydrate degradation; glycolysis; pyruvate from D-glyceraldehyde 3-phosphate: step 2/5. This is Phosphoglycerate kinase from Trichodesmium erythraeum (strain IMS101).